Here is a 928-residue protein sequence, read N- to C-terminus: Nuclear pore complex-interacting protein family member B12 (928 aa).

A helical membrane pass occupies residues 73–93 (VVITLWIVYLWVSLLKTIFWS). 2 disordered regions span residues 242 to 452 (RMGH…NIKT) and 663 to 928 (ERLR…RRLS). Residues 252 to 263 (QQHSITDNSLSL) are compositionally biased toward polar residues. Residues 349 to 359 (PLPPSAPPSAP) are compositionally biased toward pro residues. 4 stretches are compositionally biased toward basic and acidic residues: residues 406 to 416 (DNIKTPAERLR), 698 to 708 (DNIKTPAERLR), 740 to 750 (DNIKTPAERLR), and 782 to 792 (DNIKTPAERLR).

Belongs to the NPIP family.

It is found in the membrane. The protein is Nuclear pore complex-interacting protein family member B12 of Homo sapiens (Human).